Reading from the N-terminus, the 673-residue chain is Transcription initiation factor IIB (673 aa).

Residues 38-69 form a TFIIB-type zinc finger; sequence EEIVCPICGSKEVVKDYERAEIVCAKCGCVIK. Positions 42, 45, 61, and 64 each coordinate Zn(2+). The 120-residue stretch at 238-357 folds into the DOD-type homing endonuclease domain; sequence ILGYIIAEGY…VIFLLLQIKE (120 aa). 2 tandem repeats follow at residues 490 to 573 and 584 to 665.

It belongs to the TFIIB family. In terms of processing, this protein undergoes a protein self splicing that involves a post-translational excision of the intervening region (intein) followed by peptide ligation.

Stabilizes TBP binding to an archaeal box-A promoter. Also responsible for recruiting RNA polymerase II to the pre-initiation complex (DNA-TBP-TFIIB). The sequence is that of Transcription initiation factor IIB (tfb) from Methanocaldococcus jannaschii (strain ATCC 43067 / DSM 2661 / JAL-1 / JCM 10045 / NBRC 100440) (Methanococcus jannaschii).